The primary structure comprises 291 residues: 33 kDa chaperonin (291 aa).

Disulfide bonds link C236–C238 and C269–C272.

This sequence belongs to the HSP33 family. In terms of processing, under oxidizing conditions two disulfide bonds are formed involving the reactive cysteines. Under reducing conditions zinc is bound to the reactive cysteines and the protein is inactive.

It localises to the cytoplasm. Functionally, redox regulated molecular chaperone. Protects both thermally unfolding and oxidatively damaged proteins from irreversible aggregation. Plays an important role in the bacterial defense system toward oxidative stress. The sequence is that of 33 kDa chaperonin from Lactobacillus johnsonii (strain CNCM I-12250 / La1 / NCC 533).